Reading from the N-terminus, the 439-residue chain is Proline--tRNA ligase (439 aa).

It belongs to the class-II aminoacyl-tRNA synthetase family. ProS type 2 subfamily. Homodimer.

The protein resides in the cytoplasm. The catalysed reaction is tRNA(Pro) + L-proline + ATP = L-prolyl-tRNA(Pro) + AMP + diphosphate. In terms of biological role, catalyzes the attachment of proline to tRNA(Pro) in a two-step reaction: proline is first activated by ATP to form Pro-AMP and then transferred to the acceptor end of tRNA(Pro). The chain is Proline--tRNA ligase from Rhodopseudomonas palustris (strain BisB18).